The sequence spans 343 residues: MIKLSNITKVFQQGARTIQALNNVSLHVPAGQIYGVIGASGAGKSTLIRCVNLLERPTEGSVMVGGQELTTLSESELTKARRQIGMIFQHFNLLSSRTVFGNVALPLELDNTPKEEIKRRVTELLDLVGLGDKHDSYPANLSGGQKQRVAIARALASNPKVLLCDEATSALDPATTRSILELLKDINRRLGLTILLITHEMDVVKRICDCVAVISNGELIEQDTVSEVFSHPKTPLAQKFIQSTLHLDIPEDYQARLKASPETDSVPMLRMEFTGQSVDAPLLSETARRFNVNNNIISAQMDYAGGVKFGIMLTEMHGTQEETQAAIAWLQDHHVKVEVLGYV.

The 240-residue stretch at 2–241 (IKLSNITKVF…PKTPLAQKFI (240 aa)) folds into the ABC transporter domain. Position 38–45 (38–45 (GASGAGKS)) interacts with ATP.

The protein belongs to the ABC transporter superfamily. Methionine importer (TC 3.A.1.24) family. The complex is composed of two ATP-binding proteins (MetN), two transmembrane proteins (MetI) and a solute-binding protein (MetQ).

It is found in the cell inner membrane. It carries out the reaction L-methionine(out) + ATP + H2O = L-methionine(in) + ADP + phosphate + H(+). It catalyses the reaction D-methionine(out) + ATP + H2O = D-methionine(in) + ADP + phosphate + H(+). In terms of biological role, part of the ABC transporter complex MetNIQ involved in methionine import. Responsible for energy coupling to the transport system. The protein is Methionine import ATP-binding protein MetN 1 of Salmonella paratyphi A (strain ATCC 9150 / SARB42).